The primary structure comprises 923 residues: Periplasmic nitrate reductase (923 aa).

The segment at residues 1–30 (MNRRDFIKNTAIASAASVAGLSVPSSMLGA) is a signal peptide (tat-type signal). One can recognise a 4Fe-4S Mo/W bis-MGD-type domain in the interval 34–90 (WKWDKAVCRFCGTGCGIMIARKDGKIVATKGDPAAPVNRGLNCIKGYFNAKIMYGED). Residues Cys41, Cys44, Cys48, and Cys76 each contribute to the [4Fe-4S] cluster site. Mo-bis(molybdopterin guanine dinucleotide)-binding positions include Lys78, Gln146, Asn171, Cys175, 208 to 215 (WGANMAEM), Met416, Gln420, Asn526, 551 to 552 (SD), Lys574, Asp601, and 813 to 822 (TGRVLEHWHS). Trp889 serves as a coordination point for substrate. The Mo-bis(molybdopterin guanine dinucleotide) site is built by Asn897 and Lys914.

This sequence belongs to the prokaryotic molybdopterin-containing oxidoreductase family. NasA/NapA/NarB subfamily. As to quaternary structure, component of the periplasmic nitrate reductase NapAB complex composed of NapA and NapB. The cofactor is [4Fe-4S] cluster. It depends on Mo-bis(molybdopterin guanine dinucleotide) as a cofactor. Predicted to be exported by the Tat system. The position of the signal peptide cleavage has not been experimentally proven.

Its subcellular location is the periplasm. It catalyses the reaction 2 Fe(II)-[cytochrome] + nitrate + 2 H(+) = 2 Fe(III)-[cytochrome] + nitrite + H2O. In terms of biological role, catalytic subunit of the periplasmic nitrate reductase complex NapAB. Receives electrons from NapB and catalyzes the reduction of nitrate to nitrite. The protein is Periplasmic nitrate reductase of Campylobacter jejuni subsp. jejuni serotype O:23/36 (strain 81-176).